A 127-amino-acid polypeptide reads, in one-letter code: Small ribosomal subunit protein uS11 (127 aa).

It belongs to the universal ribosomal protein uS11 family. As to quaternary structure, part of the 30S ribosomal subunit. Interacts with proteins S7 and S18. Binds to IF-3.

Its function is as follows. Located on the platform of the 30S subunit, it bridges several disparate RNA helices of the 16S rRNA. Forms part of the Shine-Dalgarno cleft in the 70S ribosome. The protein is Small ribosomal subunit protein uS11 of Chlorobium phaeobacteroides (strain DSM 266 / SMG 266 / 2430).